The following is a 206-amino-acid chain: Acireductone dioxygenase (206 aa).

Fe(2+) contacts are provided by histidine 102, histidine 104, glutamate 108, and histidine 146. Ni(2+) is bound by residues histidine 102, histidine 104, glutamate 108, and histidine 146.

This sequence belongs to the acireductone dioxygenase (ARD) family. In terms of assembly, monomer. It depends on Fe(2+) as a cofactor. Requires Ni(2+) as cofactor.

The enzyme catalyses 1,2-dihydroxy-5-(methylsulfanyl)pent-1-en-3-one + O2 = 3-(methylsulfanyl)propanoate + CO + formate + 2 H(+). It catalyses the reaction 1,2-dihydroxy-5-(methylsulfanyl)pent-1-en-3-one + O2 = 4-methylsulfanyl-2-oxobutanoate + formate + 2 H(+). It participates in amino-acid biosynthesis; L-methionine biosynthesis via salvage pathway; L-methionine from S-methyl-5-thio-alpha-D-ribose 1-phosphate: step 5/6. Functionally, catalyzes 2 different reactions between oxygen and the acireductone 1,2-dihydroxy-3-keto-5-methylthiopentene (DHK-MTPene) depending upon the metal bound in the active site. Fe-containing acireductone dioxygenase (Fe-ARD) produces formate and 2-keto-4-methylthiobutyrate (KMTB), the alpha-ketoacid precursor of methionine in the methionine recycle pathway. Ni-containing acireductone dioxygenase (Ni-ARD) produces methylthiopropionate, carbon monoxide and formate, and does not lie on the methionine recycle pathway. In Frankia alni (strain DSM 45986 / CECT 9034 / ACN14a), this protein is Acireductone dioxygenase.